The primary structure comprises 153 residues: Interleukin-4 (153 aa).

Positions 1–24 are cleaved as a signal peptide; sequence MGLTSQLLPPLFFLLACAGNFVHG. 3 disulfide bridges follow: Cys27–Cys151, Cys48–Cys89, and Cys70–Cys123. Asn62 carries an N-linked (GlcNAc...) asparagine glycan.

The protein belongs to the IL-4/IL-13 family.

The protein localises to the secreted. Participates in at least several B-cell activation processes as well as of other cell types. It is a costimulator of DNA-synthesis. It induces the expression of class II MHC molecules on resting B-cells. It enhances both secretion and cell surface expression of IgE and IgG1. It also regulates the expression of the low affinity Fc receptor for IgE (CD23) on both lymphocytes and monocytes. Positively regulates IL31RA expression in macrophages. Stimulates autophagy in dendritic cells by interfering with mTORC1 signaling and through the induction of RUFY4. In Macaca fascicularis (Crab-eating macaque), this protein is Interleukin-4 (IL4).